A 3584-amino-acid polypeptide reads, in one-letter code: MSIPIPEKLQDLTAVKSPSAFGNSIESINGDKNKSERHTASSSAVSTSEIGHPCLLTNFKLAVACSGPAITKVATVNDKDSGSKLKNVINGKDISASEVFKGAWSVVLGTYLAKSHVSLDYGVMKPKGLGPETSCNARVPSENSEMSTSSFLLRANDTLLDIIRQNSMCAHTELRQKSSLDDVESPKRCNTCVIYWPEISCSEQLQIDAWMTILEENDQLTQYDCMIHFASDMRCMLSYRDQFMSENQARHLAATMRVVLSSIASAPQQSLADVDVCSSLDYQTLSRWNLKAPIVSEVCVHDLIEKSCCSRPNSQAVVSWDGCLTYNEMDRLSSHLAQRLRDAGVEPGVFVALCLDRCKWAVIGIVAVMKAGGAFCALDPSYPVSRLKEMCRDLGITIVLTVKSNIQHASPLASKVFALDDDVYFESALSSAHESASWVSVSPHDPVYAVFTSGSTGKPKGIIMEHASFSACALSSVKPLQIADQDRVLHFASYAFDASVIEILAPLIAGATVAIPSERARLEDLPRAMTDLKATWAFLTPTVARLYRPEQMPTLKTLCLGGEAVNASDTRSWSSKNLISGYNPAECCPLGISGPLNDRMPRSLGSTFASQTAWIVDPKDHEKLLPAGAIGELAIEGPVVARGYIHDVTCSDPSTPFVVKLPPWLRRFRATANRGNRIYLTGDLARLDCDDGSVHYLGRKDDQVKIHGQRVELAEIEHHLEQHFVSLATKAVVMLLRPISGRTVLAALIMPHQRLQHGNKSLESLLMEPGDVSQDFRANLASAASKLRLALPSHMVPSVYLPIRHFSTTKSGKIDRGHLQSLLLSLSPENLYGCEETTHRGEEPKSDREKLLQALFAQSLDLPCTRIDLDSNFFQLGGDSLSAMRLLALALEEGISSIAYQDIFSHPTLREIVIVSTSATSREPLYSETVETPPFSLIKDPEMLIQIASEQCGSGVGKADIEDIYPCTHLQQSLMASTAHNPNAYVAILAFKLKSGVDRTRLERAWHIACSGHAILRTRLVQTDTGDCYQVVVKKPPHWTETNEVSDDGSTNSLLRTSFGLGRPLIQLHLTTDQLFVAMHHALYDGWSLPMLIGELDLAYRELSVRRLPCLKNYVKYAMDSADAAASFWQAELQDADPVHFPAPSSLDYKPQPCAAMTISVPLVNSPRRNVTLATEIQFAWAMTVYTYTGCKDVIFGLISSGRAAPVAQIESILGPTFACTPLRVSIDPQGKLGEALDDLQYTIVEQSMFVHFGAQAIRQLGPNAAAACNFQTVLAVEADGPETGEEEGSWFTRYDFLSDVASFSSYALTLRCKLSTRGVEINAVYDKLMVDERQMGRILAQFEHILTQIHSNETVHDDIGGLDKLSVSDWRQLQAWNSNLPPAHPKGLGAHQAIQAKCQAQPDATAIDAWDGCVTYGELERRAEKLAGLVRSHVSKPDQVVVLYFSKSWLTVVAQLAVLKAGAAFITLEISQPVHYLQRVISALGPVLVLTSEDLFSAAEDLQDNAVPVMAVDKDDLSDATARTSQASSSACTVECDLMYIIATSGTTGMPKIVMTDHQAFMTNASPLMNGLGITSDSRVFQFCGYSFDLLIVEHFLTLLAGGCICIPSLHNRNNRFAASIVELEANWVGSPSSVLQLLDPQTVPTVKTIMQAGERLQQGLVDRWASHVRLINAYGPAECSVGALARDTVRPDTDDVQNLGFATGSVCWIVNAETSEKLLPVPIGAEGELIIEGHTLSRGYLGDADKTNASFLRLPNWLRDFRADRGQSQGHRVYLTGDIVRQNSDGSMSFVRRKDAQVKIRGQRVELTDVEHQVERCFIGAHQVVTDIVQIPNSQSSILVALVLTKDAMTNHKQQESLLDQKSAGGLSILAPTSSFTANANAAETALQDRMPAYMVPDLFVPVSDLPREASGKIGRKAIKQYLASLTQQDWSRYSSTRKVPPSNATEHEISAIWARVLQIEPHTFGVHDSFFRLGGDSISGMQVAAACGAAGISVTVKDMFEYRTIRKLALARGETQQLTVGTTSTVSNASGIRQKKALHPFYPEGRLEVYMERMQSRLGQAIERIYPCSPIQQGILMSHARNPHHYDEVIQWKVAGDVSCDISRMQRAWREVVSRHGILRTLFLQVSEDSFLDQVVLKNYSPDISVCTNEEDVEPYRPFEDSVPMHHLLVFQRSADDVTVYLRIHHALVDGLSLHIIRRDLELAYQGRLDELAQPPGYHEYISYLQEKRSRKSLQEYWSSYLQGATGSLFPAVQDEPASDGQYFGAVEIELGSIAKLTQFCEEHKLGVTVVLHVVWAIIVQRYAATDEVCFGYMTSGRHVPVTNVENVVGPLFNMLIGRVKLAYHLSVLSTMYAYQENFINSLDHQHQSLVETLHSIGSSAGDLFNTLITVVNDQPEDHVSQSALRLVGDSVQSRSEYPITLNILNHADKIKMQLSYHTSLLSGVSANTIAKAFRFVLQRTLEQPHELLRALPVLDEDQMNNEFQKNRSVPPQVEELIHDTIHQQCIRCPDSPSVCAWDGNFTYRQLDDLSSALSEEIVRKGAGPEVTIPIVLEKTRWTPVAMLAVLKSGSSFVLMDSTHPAARLGAIIQDVGHPVIIVSAQTRSKVATFSTDVVEVGDWLAREILVAKQQITRQNGLLQATNAAYLVFTSGSTGKPKGAIVEHASLSTAAKYMASRLHIDSASRVLQFSSHAWDIPVTEVLVTLRMGGCVCVPSEEERTGNLAKASERMKVNWALWTPTVARLFKPEEFPHLETLVFAGEALSAADLETWCDRVRLIQGYGPAECSLISTVTDPLTRSDNPRCIGLPSGCVAWVVNRDTHELLAPPGAIGELVLEGPIVGRGYLGDPERAASAFISPPAWLMKLRGSGSSIRLYKTGDLVRQHVSSGLLTFVGRNDDQVKVRGQRVEPGEVEGQVAQVFPGSQVIVLVVKRSAGAVLAALVLQNGEDRSSAGETANLFPPPSLAFAALAKAAFSKLRETMPTYMIPSIILPLSYLPKAATGKADRNLLRDRVASLSDEEIEAYVAASVSHRPASTAMEAELQQLVGQVLQRPLHSISLDEDLFRLGMDSLTAMTIASAARRRGWEVSVPIIFQHSRLSDLARIVEQGQHGTSSRSQLEEARAILNKRLVSLLPEICTKWDLREDQITHIAPTTYYQHMALASDHEAFFGLYFSKPMASEALKAAASRVVKLHSILRTAFVPLEDTYVQLTLCDFDLPSQEIQTNQAEVSAAMELFCRDAADKTAGFGVPVTKLILMLDRQGDCLSLLLRLQRAQFDGVSVMRIMADWRSALEHASCSWEPAPSLDYADFALGRVAQNTPDVFGMWRDVLQGSSMTYLIPQEKYISMTDRAHAERLVTSSCDIPLPEPAPGYTMATVAKAAWAICLARETESEDLLFLQLVRNRHLALDGIDKMVGCSLNYVPVRVPLRRDWKISDLLHWLHQQHIRTMAGDTADWPDVVAKSTTWSSDTEFGSVIHYLSAPAAPVYHFPGDTVAQFQLYDEKMTHTCPLVTCVEFPGPAEDSGRQMKILVTSAVGGQDMVDRLLAVFRSLLCEANAQLDQPLSNILQGLRDGDDATGKAR.

The tract at residues 25–44 (IESINGDKNKSERHTASSSA) is disordered. The segment covering 29 to 39 (NGDKNKSERHT) has biased composition (basic and acidic residues). The segment at 307–706 (SCCSRPNSQA…LGRKDDQVKI (400 aa)) is adenylation (A) domain 1. The Carrier 1 domain occupies 848 to 917 (REKLLQALFA…TLREIVIVST (70 aa)). Ser-880 is subject to O-(pantetheine 4'-phosphoryl)serine. The interval 962–1353 (EDIYPCTHLQ…EHILTQIHSN (392 aa)) is condensation (C) domain 1. The interval 1396 to 1803 (QAKCQAQPDA…RRKDAQVKIR (408 aa)) is adenylation (A) domain 2. The region spanning 1948–2016 (TEHEISAIWA…TIRKLALARG (69 aa)) is the Carrier 2 domain. Ser-1980 carries the O-(pantetheine 4'-phosphoryl)serine modification. Residues 2066–2483 (ERIYPCSPIQ…ALPVLDEDQM (418 aa)) form a condensation (C) domain 2 region. The segment at 2508 to 2906 (QCIRCPDSPS…GRNDDQVKVR (399 aa)) is adenylation (A) domain 3. Residues 3041 to 3109 (MEAELQQLVG…RLSDLARIVE (69 aa)) enclose the Carrier 3 domain. Residue Ser-3073 is modified to O-(pantetheine 4'-phosphoryl)serine. A cyclization (Cyc) domain region spans residues 3174–3472 (LYFSKPMASE…VAKSTTWSSD (299 aa)).

The protein belongs to the NRP synthetase family.

Its pathway is alkaloid biosynthesis; ergot alkaloid biosynthesis. In terms of biological role, D-lysergyl-peptide-synthetase subunit 1; part of the gene cluster that mediates the biosynthesis of fungal ergot alkaloid. DmaW catalyzes the first step of ergot alkaloid biosynthesis by condensing dimethylallyl diphosphate (DMAP) and tryptophan to form 4-dimethylallyl-L-tryptophan. The second step is catalyzed by the methyltransferase easF that methylates 4-dimethylallyl-L-tryptophan in the presence of S-adenosyl-L-methionine, resulting in the formation of 4-dimethylallyl-L-abrine. The catalase easC and the FAD-dependent oxidoreductase easE then transform 4-dimethylallyl-L-abrine to chanoclavine-I which is further oxidized by easD in the presence of NAD(+), resulting in the formation of chanoclavine-I aldehyde. Agroclavine dehydrogenase easG then mediates the conversion of chanoclavine-I aldehyde to agroclavine via a non-enzymatic adduct reaction: the substrate is an iminium intermediate that is formed spontaneously from chanoclavine-I aldehyde in the presence of glutathione. The presence of easA is not required to complete this reaction. Further conversion of agroclavine to paspalic acid is a two-step process involving oxidation of agroclavine to elymoclavine and of elymoclavine to paspalic acid, the second step being performed by the elymoclavine oxidase cloA. Paspalic acid is then further converted to D-lysergic acid. Ergopeptines are assembled from D-lysergic acid and three different amino acids by the D-lysergyl-peptide-synthetases composed each of a monomudular and a trimodular nonribosomal peptide synthetase subunit. LpsB and lpsC encode the monomodular subunits responsible for D-lysergic acid activation and incorporation into the ergopeptine backbone. LpsA1 and A2 subunits encode the trimodular nonribosomal peptide synthetase assembling the tripeptide portion of ergopeptines. LpsA1 is responsible for formation of the major ergopeptine, ergotamine, and lpsA2 for alpha-ergocryptine, the minor ergopeptine of the total alkaloid mixture elaborated by C.purpurea. D-lysergyl-tripeptides are assembled by the nonribosomal peptide synthetases and released as N-(D-lysergyl-aminoacyl)-lactams. Cyclolization of the D-lysergyl-tripeptides is performed by the Fe(2+)/2-ketoglutarate-dependent dioxygenase easH which introduces a hydroxyl group into N-(D-lysergyl-aminoacyl)-lactam at alpha-C of the aminoacyl residue followed by spontaneous condensation with the terminal lactam carbonyl group. This chain is D-lysergyl-peptide-synthetase subunit 1, found in Claviceps purpurea (strain 20.1) (Ergot fungus).